Here is a 218-residue protein sequence, read N- to C-terminus: ATP-dependent dethiobiotin synthetase BioD (218 aa).

10–15 (NAGKTT) provides a ligand contact to ATP. Residue threonine 14 coordinates Mg(2+). Lysine 35 is an active-site residue. Threonine 39 is a binding site for substrate. Glutamate 116 is a binding site for Mg(2+). Residues 116 to 119 (EGAG) and 176 to 177 (LR) contribute to the ATP site.

Belongs to the dethiobiotin synthetase family. As to quaternary structure, homodimer. The cofactor is Mg(2+).

It is found in the cytoplasm. It catalyses the reaction (7R,8S)-7,8-diammoniononanoate + CO2 + ATP = (4R,5S)-dethiobiotin + ADP + phosphate + 3 H(+). The protein operates within cofactor biosynthesis; biotin biosynthesis; biotin from 7,8-diaminononanoate: step 1/2. Catalyzes a mechanistically unusual reaction, the ATP-dependent insertion of CO2 between the N7 and N8 nitrogen atoms of 7,8-diaminopelargonic acid (DAPA, also called 7,8-diammoniononanoate) to form a ureido ring. The protein is ATP-dependent dethiobiotin synthetase BioD of Helicobacter pylori (strain J99 / ATCC 700824) (Campylobacter pylori J99).